A 230-amino-acid polypeptide reads, in one-letter code: ATP phosphoribosyltransferase (230 aa).

The protein belongs to the ATP phosphoribosyltransferase family. Short subfamily. Heteromultimer composed of HisG and HisZ subunits.

Its subcellular location is the cytoplasm. It catalyses the reaction 1-(5-phospho-beta-D-ribosyl)-ATP + diphosphate = 5-phospho-alpha-D-ribose 1-diphosphate + ATP. It functions in the pathway amino-acid biosynthesis; L-histidine biosynthesis; L-histidine from 5-phospho-alpha-D-ribose 1-diphosphate: step 1/9. Functionally, catalyzes the condensation of ATP and 5-phosphoribose 1-diphosphate to form N'-(5'-phosphoribosyl)-ATP (PR-ATP). Has a crucial role in the pathway because the rate of histidine biosynthesis seems to be controlled primarily by regulation of HisG enzymatic activity. The protein is ATP phosphoribosyltransferase of Agrobacterium fabrum (strain C58 / ATCC 33970) (Agrobacterium tumefaciens (strain C58)).